The sequence spans 508 residues: Early growth response protein 1 (508 aa).

Disordered stretches follow at residues 18-78 (PQFL…ESFS) and 136-210 (MTNP…QYPP). A compositionally biased stretch (low complexity) spans 33 to 42 (NNSSSSSSSS). The span at 43 to 52 (SGGGGGGGSN) shows a compositional bias: gly residues. A compositionally biased stretch (low complexity) spans 139-164 (PPTSSSSAPSPAASSSSSASQSPPLS). A Glycyl lysine isopeptide (Lys-Gly) (interchain with G-Cter in SUMO2) cross-link involves residue K278. The segment at 292–311 (SRMRKYPNRPSKTPPHERPY) is disordered. 3 consecutive C2H2-type zinc fingers follow at residues 311-335 (YACPVESCDRRFSRSDELTRHIRIH), 341-363 (FQCRICMRNFSRSDHLTTHIRTH), and 369-391 (FACDICGRKFARSDERKRHTKIH). The tract at residues 382–453 (DERKRHTKIH…SSTYPSPAHS (72 aa)) is disordered. Over residues 386 to 396 (RHTKIHLRQKD) the composition is skewed to basic residues. A compositionally biased stretch (low complexity) spans 402–450 (SVVASSAASSLSSYPSPVATSYPSPATTSFPSPVPTSYSSPGSSTYPSP). 7 repeat units span residues 413–420 (SSYPSPVA), 421–428 (TSYPSPAT), 429–436 (TSFPSPVP), 437–444 (TSYSSPGS), 445–452 (STYPSPAH), 453–460 (SGFPSPSV), and 462–468 (TTYASVP). A 7 X 8 AA tandem repeats of [TS](2)-[FY]-[PS]-S-P-[GSAV]-X region spans residues 413 to 468 (SSYPSPVATSYPSPATTSFPSPVPTSYSSPGSSTYPSPAHSGFPSPSVATTYASVP).

It belongs to the EGR C2H2-type zinc-finger protein family. Interacts with SNAI1 and SP1 upon 12-O-tetradecanoylphorbol-13-acetate (TPA) induction. In terms of tissue distribution, detected in kidney thick ascending limbs and collecting ducts (at protein level).

It is found in the nucleus. The protein resides in the cytoplasm. In terms of biological role, transcriptional regulator. Recognizes and binds to the DNA sequence 5'-GCG(T/G)GGGCG-3'(EGR-site) in the promoter region of target genes. Binds double-stranded target DNA, irrespective of the cytosine methylation status. Regulates the transcription of numerous target genes, and thereby plays an important role in regulating the response to growth factors, DNA damage, and ischemia. Plays a role in the regulation of cell survival, proliferation and cell death. Activates expression of p53/TP53 and TGFB1, and thereby helps prevent tumor formation. Required for normal progress through mitosis and normal proliferation of hepatocytes after partial hepatectomy. Mediates responses to ischemia and hypoxia; regulates the expression of proteins such as IL1B and CXCL2 that are involved in inflammatory processes and development of tissue damage after ischemia. Regulates biosynthesis of luteinizing hormone (LHB) in the pituitary. Regulates the amplitude of the expression rhythms of clock genes: BMAL1, PER2 and NR1D1 in the liver via the activation of PER1 (clock repressor) transcription. Regulates the rhythmic expression of core-clock gene BMAL1 in the suprachiasmatic nucleus (SCN). Regulates biosynthesis of glucocorticoid receptor GR/NR3C1 in the hippocampus and thereby may play a role in the behavioral and hypothalamic-pituitary-adrenal responses to stress in offspring. The polypeptide is Early growth response protein 1 (Egr1) (Rattus norvegicus (Rat)).